Here is a 248-residue protein sequence, read N- to C-terminus: 2,3-bisphosphoglycerate-dependent phosphoglycerate mutase (248 aa).

Substrate contacts are provided by residues 8 to 15 (RHGESTWN), 21 to 22 (TG), Arg-60, 87 to 90 (ERHY), Lys-98, 114 to 115 (RR), and 183 to 184 (GN). His-9 acts as the Tele-phosphohistidine intermediate in catalysis. Residue Glu-87 is the Proton donor/acceptor of the active site.

It belongs to the phosphoglycerate mutase family. BPG-dependent PGAM subfamily. In terms of assembly, homodimer.

The catalysed reaction is (2R)-2-phosphoglycerate = (2R)-3-phosphoglycerate. The protein operates within carbohydrate degradation; glycolysis; pyruvate from D-glyceraldehyde 3-phosphate: step 3/5. In terms of biological role, catalyzes the interconversion of 2-phosphoglycerate and 3-phosphoglycerate. The chain is 2,3-bisphosphoglycerate-dependent phosphoglycerate mutase from Cupriavidus pinatubonensis (strain JMP 134 / LMG 1197) (Cupriavidus necator (strain JMP 134)).